We begin with the raw amino-acid sequence, 238 residues long: Probable transcriptional regulatory protein SPH_2064 (238 aa).

Belongs to the TACO1 family. YeeN subfamily.

It is found in the cytoplasm. The polypeptide is Probable transcriptional regulatory protein SPH_2064 (Streptococcus pneumoniae (strain Hungary19A-6)).